A 729-amino-acid polypeptide reads, in one-letter code: Glutamine synthetase (729 aa).

The region spanning 85-174 (THYTHWFQPL…IPTIFISYTG (90 aa)) is the GS beta-grasp domain. Residues 179 to 615 (YKTPLLKALA…VLGDLAINHI (437 aa)) form the GS catalytic domain. Mg(2+)-binding residues include glutamate 215, glutamate 217, glutamate 286, and glutamate 293. L-glutamate contacts are provided by residues 337 to 338 (NG) and glycine 338. Histidine 342 contributes to the Mg(2+) binding site. ATP contacts are provided by serine 346 and arginine 458. An L-glutamate-binding site is contributed by arginine 458.

The protein belongs to the glutamine synthetase family. In terms of assembly, homohexamer. Mg(2+) is required as a cofactor.

Its subcellular location is the cytoplasm. The catalysed reaction is L-glutamate + NH4(+) + ATP = L-glutamine + ADP + phosphate + H(+). With respect to regulation, inhibited by L-histidine (46%), L-arginine (38%) and L-methionine-DL-sulphoximine. The activity of this enzyme is not controlled by adenylation. Its function is as follows. Catalyzes the ATP-dependent biosynthesis of glutamine from glutamate and ammonia. In Bacteroides fragilis (strain YCH46), this protein is Glutamine synthetase.